A 1033-amino-acid chain; its full sequence is NACHT, LRR and PYD domains-containing protein 11 (1033 aa).

Residues 1-91 (MAESDSTDFD…CRKIIGRRNR (91 aa)) enclose the Pyrin domain. Residues 147-470 (LNVFLMGERA…AFLMAVPNYL (324 aa)) form the NACHT domain. Residue 153–160 (GERASGKT) coordinates ATP. LRR repeat units follow at residues 588–611 (CCHLRTLKLSVQRIFQNKEPLIRP), 632–655 (MESLRELHIFDNDLNGISERILSK), 745–768 (GGSLRKLTLSSNPLRSDGMNILCD), 802–827 (SPTLRQLDLCVNRLKNYGVLHVTFPL), 859–882 (NEKLRSLEIGSNKIEDAGMQLLCG), and 919–944 (LERLNLLQNHLGNDGVAKLLESLISP).

Belongs to the NLRP family.

Its function is as follows. Involved in inflammation. This is NACHT, LRR and PYD domains-containing protein 11 (NLRP11) from Homo sapiens (Human).